A 44-amino-acid polypeptide reads, in one-letter code: Small ribosomal subunit protein eS7 (44 aa).

Residues 18–34 (KPTRKSRIKNKQKRPRS) are compositionally biased toward basic residues. Positions 18 to 44 (KPTRKSRIKNKQKRPRSRTLTAVHDAI) are disordered.

It belongs to the eukaryotic ribosomal protein eS7 family. As to quaternary structure, component of the small ribosomal subunit.

The protein localises to the cytoplasm. It localises to the cytoskeleton. It is found in the microtubule organizing center. Its subcellular location is the centrosome. The protein resides in the nucleus. Functionally, component of the small ribosomal subunit. The ribosome is a large ribonucleoprotein complex responsible for the synthesis of proteins in the cell. Required for rRNA maturation. The sequence is that of Small ribosomal subunit protein eS7 (rps7) from Salmo salar (Atlantic salmon).